We begin with the raw amino-acid sequence, 963 residues long: MSPMDLQESAAALVRQLGERVEDRRGFGFMSPAIYDTAWVSMISKTIDDQKTWLFAECFQYILSHQLEDGGWAMYASEIDAILNTSASLLSLKRHLSNPYQITSITQEDLSARINRAQNALQKLLNEWNVDSTLHVGFEILVPALLRYLEDEGIAFAFSGRERLLEIEKQKLSKFKAQYLYLPIKVTALHSLEAFIGAIEFDKVSHHKVSGAFMASPSSTAAYMMHATQWDDECEDYLRHVIAHASGKGSGGVPSAFPSTIFESVWPLSTLLKVGYDLNSAPFIEKIRSYLHDAYIAEKGILGFTPFVGADADDTATTILVLNLLNQPVSVDAMLKEFEEEHHFKTYSQERNPSFSANCNVLLALLYSQEPSLYSAQIEKAIRFLYKQFTDSEMDVRDKWNLSPYYSWMLMTQAITRLTTLQKTSKLSTLRDDSISKGLISLLFRIASTVVKDQKPGGSWGTRASKEETAYAVLILTYAFYLDEVTESLRHDIKIAIENGCSFLSERTMQSDSEWLWVEKVTYKSEVLSEAYILAALKRAADLPDENAEAAPVINGISTNGFEHTDRINGKLKVNGTNGTNGSHETNGINGTHEIEQINGVNGTNGHSDVPHDTNGWVEEPTAINETNGHYVNGTNHETPLTNGISNGDSVSVHTDHSDSYYQRSDWTADEEQILLGPFDYLESLPGKNMRSQLIQSFNTWLKVPTESLDVIIKVISMLHTASLLIDDIQDQSILRRGQPVAHSIFGTAQAMNSGNYVYFLALREVQKLQNPKAISIYVDSLIDLHRGQGMELFWRDSLMCPTEEQYLDMVANKTGGLFCLAIQLMQAEATIQVDFIPLVRLLGIIFQICDDYLNLKSTAYTDNKGLCEDLTEGKFSFPIIHSIRSNPGNRQLINILKQKPREDDIKRYALSYMESTNSFEYTRGVVRKLKTEAIDTIQGLEKHGLEENIGIRKILARMSLEL.

Residues 1–539 (MSPMDLQESA…EAYILAALKR (539 aa)) form a type II terpene cyclase (TC) region. A substrate binding region spans residues 227–292 (ATQWDDECED…FIEKIRSYLH (66 aa)). Residues D311 and D314 each coordinate Mg(2+). The short motif at 311–314 (DADD) is the DXDD element. The NSE/DTE motif lies at 333–341 (AMLKEFEEE). Substrate is bound by residues 337 to 341 (EFEEE) and 521 to 522 (VT). The interval 540-659 (AADLPDENAE…SVSVHTDHSD (120 aa)) is linker. Positions 627-648 (TNGHYVNGTNHETPLTNGISNG) are enriched in polar residues. Residues 627–657 (TNGHYVNGTNHETPLTNGISNGDSVSVHTDH) form a disordered region. The tract at residues 660–963 (SYYQRSDWTA…KILARMSLEL (304 aa)) is geranylfarnesyl diphosphate synthase (PT). 3 residues coordinate isopentenyl diphosphate: K688, R691, and H720. D727 and D731 together coordinate Mg(2+). A DDXXD 1 motif is present at residues 727–731 (DDIQD). R736 provides a ligand contact to dimethylallyl diphosphate. Position 737 (R737) interacts with isopentenyl diphosphate. The dimethylallyl diphosphate site is built by K814, T815, Q848, N855, K865, and K875. The short motif at 851 to 855 (DDYLN) is the DDXXD 2 element.

It in the N-terminal section; belongs to the terpene synthase family. This sequence in the C-terminal section; belongs to the FPP/GGPP synthase family. Homohexamer. It depends on Mg(2+) as a cofactor.

The catalysed reaction is isopentenyl diphosphate + (2E,6E)-farnesyl diphosphate = (2E,6E,10E)-geranylgeranyl diphosphate + diphosphate. It catalyses the reaction (2E,6E,10E)-geranylgeranyl diphosphate = (+)-copalyl diphosphate. Bifunctional terpene synthase that possesses both prenyltransferase and type II terpene cyclase activity, converting isopentenyl diphosphate (IPP) and dimethylallyl diphosphate (DMAPP) into geranylgeranyl diphosphate (GGPP) and further converting GGPP into copalyl diphosphate, respectively. In Talaromyces verruculosus (Penicillium verruculosum), this protein is Copalyl diphosphate synthase.